Here is a 555-residue protein sequence, read N- to C-terminus: Transcription factor kojR (555 aa).

Residues 21–47 constitute a DNA-binding region (zn(2)-C6 fungal-type); it reads CETCKLRKRKCDGHEPCTYCLRYEYQC. Residues 51–73 form a disordered region; it reads PHPRRKPAASKSSARPSEEEDSP.

Its subcellular location is the nucleus. In terms of biological role, transcription factor that regulates the gene cluster that mediates the biosynthesis of 5-hydroxy-2-hydroxymethyl-1,4-pyrone, also know as kojic acid, a by-product in the fermentation process of malting rice that acts as a chelation agent. Negatively regulates the expression of the kojic acid-related protein kap1. Improves the antioxidant capacity via the accumulation of kojic acid that is also a strong oxidant. This Aspergillus oryzae (strain ATCC 42149 / RIB 40) (Yellow koji mold) protein is Transcription factor kojR.